Consider the following 85-residue polypeptide: Sec-independent protein translocase protein TatA (85 aa).

Residues 1-21 (MGGISIWQLLIIALIVVLLFG) traverse the membrane as a helical segment. The tract at residues 43 to 85 (MSSDEDKKALEDAEAAKSVQTAQTAQPTQQATEKKPESNKEQA) is disordered. Basic and acidic residues predominate over residues 46–57 (DEDKKALEDAEA). The segment covering 58-73 (AKSVQTAQTAQPTQQA) has biased composition (low complexity). Over residues 74-85 (TEKKPESNKEQA) the composition is skewed to basic and acidic residues.

The protein belongs to the TatA/E family. As to quaternary structure, the Tat system comprises two distinct complexes: a TatABC complex, containing multiple copies of TatA, TatB and TatC subunits, and a separate TatA complex, containing only TatA subunits. Substrates initially bind to the TatABC complex, which probably triggers association of the separate TatA complex to form the active translocon.

It localises to the cell inner membrane. Functionally, part of the twin-arginine translocation (Tat) system that transports large folded proteins containing a characteristic twin-arginine motif in their signal peptide across membranes. TatA could form the protein-conducting channel of the Tat system. This chain is Sec-independent protein translocase protein TatA, found in Shewanella sp. (strain ANA-3).